We begin with the raw amino-acid sequence, 68 residues long: Large ribosomal subunit protein bL31 (68 aa).

The protein belongs to the bacterial ribosomal protein bL31 family. Type A subfamily. In terms of assembly, part of the 50S ribosomal subunit.

Its function is as follows. Binds the 23S rRNA. The chain is Large ribosomal subunit protein bL31 from Helicobacter hepaticus (strain ATCC 51449 / 3B1).